The primary structure comprises 356 residues: Trans-enoyl reductase pgmF (356 aa).

NADP(+) contacts are provided by residues 57–60 (VDFK), 175–178 (SGGC), 198–201 (STPN), Tyr216, 261–262 (VG), and 342–343 (AK).

The protein belongs to the zinc-containing alcohol dehydrogenase family.

In terms of biological role, FAD-linked oxidoreductase; part of the gene cluster that mediates the biosynthesis of pleosporalin A, ascomycone A, as well as a third cryptic naphthoquinone derived pigment, all responsible for the coloration of conidia. The pathway begins with the biosynthesis of the cyclized heptaketide 3-acetonyl-1,6,8-trihydroxy-2-naphthaldehyde by the NR-PKS pgmA. The C-6 hydroxyl group is further methylated by the O-methyltransferase pgmB to yield fusarubinaldehyde which is in turn oxidized by the cytochrome P450 monooxygenase pgmC at C-9. The C-1 hydroxyl group is then methylated spontaneously. Although pgmE, pgmD and pgmH are essential for the production of pleosporalin A, it is not the case for the 2 other final products and it remains difficult to assign a specific function to each enzyme. PgmF and pgmG seem not to be involved in pigment biosynthesis although they were regulated by the cluster-specific transcription factor pgmR. This chain is Trans-enoyl reductase pgmF, found in Aspergillus terreus (strain NIH 2624 / FGSC A1156).